Reading from the N-terminus, the 514-residue chain is Cilia- and flagella-associated protein 53 (514 aa).

The stretch at 207–429 forms a coiled coil; sequence EDRLAKERRE…ERINEGLKEL (223 aa).

The protein belongs to the CFAP53 family. As to quaternary structure, microtubule inner protein component of sperm flagellar doublet microtubules. Interacts with PIERCE1 and PIERCE2; the interactions link outer dynein arms docking complex (ODA-DC) to the internal microtubule inner proteins (MIP) in cilium axoneme. Interacts with CCDC38. Interacts with CCDC42 and IFT88. Interacts with centriolar satellite proteins PIBF1/CEP90 and PCM1. Interacts with dyneins DNAIC1, DNAIC2 AND DNAH11 and with ODA-DC component ODAD4/TTC25. In terms of tissue distribution, expressed in trachea multiciliated cells.

The protein localises to the cytoplasm. It is found in the cytoskeleton. It localises to the cilium axoneme. Its subcellular location is the flagellum axoneme. The protein resides in the microtubule organizing center. The protein localises to the centrosome. It is found in the centriolar satellite. It localises to the spindle pole. In terms of biological role, microtubule inner protein (MIP) part of the dynein-decorated doublet microtubules (DMTs) in cilia axoneme, which is required for motile cilia beating. Regulates motility patterns of both 9+0 and 9+2 motile cilia through differential localization and recruitment of axonemal dynein components. Required for centriolar satellite integrity and non-motile cilium assembly. Required for motile cilium formation. Through its role in beating of primary cilia, involved in the establishment of organ laterality during embryogenesis. Required for sperm flagellum biogenesis and is essential for male fertility. In Bos taurus (Bovine), this protein is Cilia- and flagella-associated protein 53 (CFAP53).